The primary structure comprises 338 residues: Ketol-acid reductoisomerase (NADP(+)) (338 aa).

The 181-residue stretch at 1 to 181 folds into the KARI N-terminal Rossmann domain; the sequence is MQIFYDKDCD…GGGRTGIIET (181 aa). Residues 24 to 27, R47, S50, S52, and 82 to 85 each bind NADP(+); these read YGSQ and DEFQ. The active site involves H107. G133 provides a ligand contact to NADP(+). The KARI C-terminal knotted domain occupies 182–327; that stretch reads SFREETETDL…AKLRAMMPWI (146 aa). Mg(2+) contacts are provided by D190, E194, E226, and E230. S251 contacts substrate.

It belongs to the ketol-acid reductoisomerase family. The cofactor is Mg(2+).

It catalyses the reaction (2R)-2,3-dihydroxy-3-methylbutanoate + NADP(+) = (2S)-2-acetolactate + NADPH + H(+). The enzyme catalyses (2R,3R)-2,3-dihydroxy-3-methylpentanoate + NADP(+) = (S)-2-ethyl-2-hydroxy-3-oxobutanoate + NADPH + H(+). It functions in the pathway amino-acid biosynthesis; L-isoleucine biosynthesis; L-isoleucine from 2-oxobutanoate: step 2/4. It participates in amino-acid biosynthesis; L-valine biosynthesis; L-valine from pyruvate: step 2/4. Its function is as follows. Involved in the biosynthesis of branched-chain amino acids (BCAA). Catalyzes an alkyl-migration followed by a ketol-acid reduction of (S)-2-acetolactate (S2AL) to yield (R)-2,3-dihydroxy-isovalerate. In the isomerase reaction, S2AL is rearranged via a Mg-dependent methyl migration to produce 3-hydroxy-3-methyl-2-ketobutyrate (HMKB). In the reductase reaction, this 2-ketoacid undergoes a metal-dependent reduction by NADPH to yield (R)-2,3-dihydroxy-isovalerate. The chain is Ketol-acid reductoisomerase (NADP(+)) from Acinetobacter baumannii (strain AB0057).